A 152-amino-acid polypeptide reads, in one-letter code: MAKRVKVVLKEDILSLGKDGDVVEVAPGYARNFLLSQQKALAVTPSVLKQVEYRLAKKAELEAAKKQEAIDFETALKTIGRFSIKKQTGEDGVLFGTVTNGDVSEAIQLATQKEIDRRNIIVPEIHETGKYKVQVKLHSEVTAEINLEVIGN.

Belongs to the bacterial ribosomal protein bL9 family.

Binds to the 23S rRNA. The sequence is that of Large ribosomal subunit protein bL9 from Prochlorococcus marinus (strain SARG / CCMP1375 / SS120).